Here is a 251-residue protein sequence, read N- to C-terminus: Flap endonuclease Xni (251 aa).

Asp104 is a binding site for Mg(2+). The 5'-3' exonuclease domain maps to 160–249; that stretch reads VLPRQLPDYW…IDGNLQQLRL (90 aa). Leu171, Ala172, Pro180, Val182, and Ile185 together coordinate K(+). Positions 184 to 189 are interaction with DNA; the sequence is GIGPKS.

It belongs to the Xni family. It depends on Mg(2+) as a cofactor. K(+) is required as a cofactor.

Its function is as follows. Has flap endonuclease activity. During DNA replication, flap endonucleases cleave the 5'-overhanging flap structure that is generated by displacement synthesis when DNA polymerase encounters the 5'-end of a downstream Okazaki fragment. This is Flap endonuclease Xni from Salmonella typhimurium (strain LT2 / SGSC1412 / ATCC 700720).